Reading from the N-terminus, the 363-residue chain is MGNTFGHLFRVTTFGESHGGGVGVVVDGCPPRLELSEVDIQKELDRRRPGQSRLTTPRQESDRCEILSGVFEGKTLGTPIAILVRNKDTRPEDYAEMAQVYRPSHADATYDAKYGIRNWQGGGRSSARETIGRVAAGAIARKILTQVAGTEIIAYVKRVKDIEAVVDPDTVAAAAVEANIMRCPDAATAEKMIALVDEVRRQANSIGGVIECVVRNVPVGLGSPVFDKLEADLAKGVMSLPASKGFEIGSGFAGTLLTGQEHNDEFYTDAQGRIRTRTNRSGGVQGGISNGENIILRVAFKPTATIGQAQKTVNRAGEETILAAKGRHDPCVLPRAVPMVEAMVALVLCDHLLRDHAQCHLNF.

The NADP(+) site is built by R47 and R53. FMN-binding positions include 124-126, G286, 301-305, and R327; these read RSS and KPTAT.

This sequence belongs to the chorismate synthase family. As to quaternary structure, homotetramer. FMNH2 serves as cofactor.

The enzyme catalyses 5-O-(1-carboxyvinyl)-3-phosphoshikimate = chorismate + phosphate. It participates in metabolic intermediate biosynthesis; chorismate biosynthesis; chorismate from D-erythrose 4-phosphate and phosphoenolpyruvate: step 7/7. Its function is as follows. Catalyzes the anti-1,4-elimination of the C-3 phosphate and the C-6 proR hydrogen from 5-enolpyruvylshikimate-3-phosphate (EPSP) to yield chorismate, which is the branch point compound that serves as the starting substrate for the three terminal pathways of aromatic amino acid biosynthesis. This reaction introduces a second double bond into the aromatic ring system. This is Chorismate synthase from Thermosynechococcus vestitus (strain NIES-2133 / IAM M-273 / BP-1).